Consider the following 470-residue polypeptide: Neuraminidase (470 aa).

At 1–14 the chain is on the intravirion side; it reads MNPNQKIITIGSAS. Residues 11 to 32 are involved in apical transport and lipid raft association; that stretch reads GSASLGLVILNVILHVVSIIVT. Residues 15–35 form a helical membrane-spanning segment; it reads LGLVILNVILHVVSIIVTVLV. The tract at residues 32–86 is hypervariable stalk region; it reads TVLVLSNNGTGPNCNGTIIREYNETVRVERITQWYNTNIIEYIEEPSNEYYMSNT. At 36 to 470 the chain is on the virion surface side; it reads LSNNGTGPNC…AILPFDIDKM (435 aa). Asn39, Asn46, and Asn54 each carry an N-linked (GlcNAc...) asparagine; by host glycan. Residues 89–470 are head of neuraminidase; the sequence is LCEAQGFAPF…AILPFDIDKM (382 aa). Cystine bridges form between Cys90-Cys417, Cys122-Cys127, Cys182-Cys229, Cys231-Cys236, Cys277-Cys290, Cys279-Cys288, Cys316-Cys335, and Cys421-Cys446. Residue Arg116 coordinates substrate. The N-linked (GlcNAc...) asparagine; by host glycan is linked to Asn144. Asp149 serves as the catalytic Proton donor/acceptor. Arg150 contacts substrate. 275–276 contacts substrate; sequence EE. A substrate-binding site is contributed by Arg291. Asp292 lines the Ca(2+) pocket. The N-linked (GlcNAc...) asparagine; by host glycan is linked to Asn293. 2 residues coordinate Ca(2+): Gly296 and Asp322. Residue Arg368 coordinates substrate. Asn398 carries N-linked (GlcNAc...) asparagine; by host glycosylation. Tyr402 functions as the Nucleophile in the catalytic mechanism.

It belongs to the glycosyl hydrolase 34 family. As to quaternary structure, homotetramer. Ca(2+) is required as a cofactor. Post-translationally, N-glycosylated.

It localises to the virion membrane. The protein resides in the host apical cell membrane. The enzyme catalyses Hydrolysis of alpha-(2-&gt;3)-, alpha-(2-&gt;6)-, alpha-(2-&gt;8)- glycosidic linkages of terminal sialic acid residues in oligosaccharides, glycoproteins, glycolipids, colominic acid and synthetic substrates.. Its activity is regulated as follows. Inhibited by the neuraminidase inhibitors zanamivir (Relenza) and oseltamivir (Tamiflu). These drugs interfere with the release of progeny virus from infected cells and are effective against all influenza strains. Resistance to neuraminidase inhibitors is quite rare. In terms of biological role, catalyzes the removal of terminal sialic acid residues from viral and cellular glycoconjugates. Cleaves off the terminal sialic acids on the glycosylated HA during virus budding to facilitate virus release. Additionally helps virus spread through the circulation by further removing sialic acids from the cell surface. These cleavages prevent self-aggregation and ensure the efficient spread of the progeny virus from cell to cell. Otherwise, infection would be limited to one round of replication. Described as a receptor-destroying enzyme because it cleaves a terminal sialic acid from the cellular receptors. May facilitate viral invasion of the upper airways by cleaving the sialic acid moieties on the mucin of the airway epithelial cells. Likely to plays a role in the budding process through its association with lipid rafts during intracellular transport. May additionally display a raft-association independent effect on budding. Plays a role in the determination of host range restriction on replication and virulence. Sialidase activity in late endosome/lysosome traffic seems to enhance virus replication. This chain is Neuraminidase, found in Influenza A virus (strain A/Equine/Miami/1/1963 H3N8).